We begin with the raw amino-acid sequence, 486 residues long: Histidine--tRNA ligase, chloroplastic/mitochondrial (486 aa).

This sequence belongs to the class-II aminoacyl-tRNA synthetase family.

The protein resides in the plastid. It localises to the chloroplast. It is found in the mitochondrion. The enzyme catalyses tRNA(His) + L-histidine + ATP = L-histidyl-tRNA(His) + AMP + diphosphate + H(+). In Arabidopsis thaliana (Mouse-ear cress), this protein is Histidine--tRNA ligase, chloroplastic/mitochondrial.